The sequence spans 436 residues: Phosphatidylinositol transfer protein CSR1 (436 aa).

The segment at 85–104 (VYDAEKVEDSDAEKEKPTPQ) is disordered. Residues 86–102 (YDAEKVEDSDAEKEKPT) show a composition bias toward basic and acidic residues. The CRAL-TRIO domain maps to 188-347 (KKGIVKQLEL…ELGGKDEYNF (160 aa)).

The protein belongs to the PITP family. In terms of assembly, binds phosphatidylinositol (PtdIns).

The protein resides in the cytoplasm. It is found in the endosome. Its function is as follows. Non-classical phosphatidylinositol (PtdIns) transfer protein (PITP), which exhibits PtdIns-binding/transfer activity in the absence of detectable PtdCho-binding/transfer activity. May also regulate post-Golgi membrane-trafficking events and have a role resistance to oxidative stress. The sequence is that of Phosphatidylinositol transfer protein CSR1 (CSR1) from Eremothecium gossypii (strain ATCC 10895 / CBS 109.51 / FGSC 9923 / NRRL Y-1056) (Yeast).